Here is a 40-residue protein sequence, read N- to C-terminus: Omega-conotoxin RsXXVIA (40 aa).

In terms of processing, contains 4 disulfide bonds. Expressed by the venom duct.

The protein localises to the secreted. Its function is as follows. Omega-conotoxins act at presynaptic membranes, they bind and block voltage-gated calcium channels (Cav). This toxin inhibits rat Cav2.2/CACNA1B calcium channels in a dose-dependent manner (EC(50)=2.8 uM), whose effect is partially reversed after washing. In vivo, when injected into mice, it shows both an analgesic effect in acute thermal pain at 30 and 45 minutes post-injection and an anti-nociceptive effect in a formalin chronic pain test. The protein is Omega-conotoxin RsXXVIA of Conus regularis (Regular cone).